Consider the following 328-residue polypeptide: Cell division protein ZipA (328 aa).

Residues 1 to 6 (MMQDLR) are Periplasmic-facing. Residues 7–27 (LILIVVGAIAIIALLLHGLWT) form a helical membrane-spanning segment. Over 28 to 328 (SRKERSSLFR…REVLDANTIA (301 aa)) the chain is Cytoplasmic. Positions 61 to 72 (GEVRVRTSHPQE) are enriched in basic and acidic residues. The tract at residues 61–183 (GEVRVRTSHP…EPVAPAPEAK (123 aa)) is disordered. Composition is skewed to polar residues over residues 95-104 (KSAQVKTASR) and 164-174 (APQQHVESQQE).

It belongs to the ZipA family. Interacts with FtsZ via their C-terminal domains.

It is found in the cell inner membrane. Functionally, essential cell division protein that stabilizes the FtsZ protofilaments by cross-linking them and that serves as a cytoplasmic membrane anchor for the Z ring. Also required for the recruitment to the septal ring of downstream cell division proteins. The polypeptide is Cell division protein ZipA (Yersinia pestis bv. Antiqua (strain Antiqua)).